A 494-amino-acid polypeptide reads, in one-letter code: Bifunctional protein HldE (494 aa).

The interval methionine 1–alanine 334 is ribokinase. Asparagine 209–glutamate 212 provides a ligand contact to ATP. The active site involves aspartate 279. The interval phenylalanine 362–lysine 494 is cytidylyltransferase.

The protein in the N-terminal section; belongs to the carbohydrate kinase PfkB family. It in the C-terminal section; belongs to the cytidylyltransferase family. Homodimer.

The enzyme catalyses D-glycero-beta-D-manno-heptose 7-phosphate + ATP = D-glycero-beta-D-manno-heptose 1,7-bisphosphate + ADP + H(+). It carries out the reaction D-glycero-beta-D-manno-heptose 1-phosphate + ATP + H(+) = ADP-D-glycero-beta-D-manno-heptose + diphosphate. It functions in the pathway nucleotide-sugar biosynthesis; ADP-L-glycero-beta-D-manno-heptose biosynthesis; ADP-L-glycero-beta-D-manno-heptose from D-glycero-beta-D-manno-heptose 7-phosphate: step 1/4. Its pathway is nucleotide-sugar biosynthesis; ADP-L-glycero-beta-D-manno-heptose biosynthesis; ADP-L-glycero-beta-D-manno-heptose from D-glycero-beta-D-manno-heptose 7-phosphate: step 3/4. Functionally, catalyzes the phosphorylation of D-glycero-D-manno-heptose 7-phosphate at the C-1 position to selectively form D-glycero-beta-D-manno-heptose-1,7-bisphosphate. In terms of biological role, catalyzes the ADP transfer from ATP to D-glycero-beta-D-manno-heptose 1-phosphate, yielding ADP-D-glycero-beta-D-manno-heptose. The chain is Bifunctional protein HldE from Bradyrhizobium diazoefficiens (strain JCM 10833 / BCRC 13528 / IAM 13628 / NBRC 14792 / USDA 110).